The primary structure comprises 331 residues: Probable mannose-1-phosphate guanylyltransferase 3 (331 aa).

Position 3 (K3) interacts with diphosphate. 5 residues coordinate GDP-alpha-D-mannose: G66, N90, D92, G127, and N154.

This sequence belongs to the transferase hexapeptide repeat family.

It carries out the reaction alpha-D-mannose 1-phosphate + GTP + H(+) = GDP-alpha-D-mannose + diphosphate. Its pathway is nucleotide-sugar biosynthesis; GDP-alpha-D-mannose biosynthesis; GDP-alpha-D-mannose from alpha-D-mannose 1-phosphate (GTP route): step 1/1. Functionally, catalyzes a reaction of the Smirnoff-Wheeler pathway, the major route to ascorbate biosynthesis in plants. This Arabidopsis thaliana (Mouse-ear cress) protein is Probable mannose-1-phosphate guanylyltransferase 3.